The primary structure comprises 686 residues: Lysophospholipase 3 (686 aa).

The N-terminal stretch at 1–26 (MIRPLCSKIIISYIFAISQFLLAANA) is a signal peptide. One can recognise a PLA2c domain in the interval 39-592 (SCPDDINLVR…KNYCWNGTLD (554 aa)). N-linked (GlcNAc...) asparagine glycosylation is found at asparagine 56, asparagine 82, asparagine 129, asparagine 166, asparagine 221, asparagine 283, asparagine 313, asparagine 351, asparagine 495, asparagine 519, asparagine 547, asparagine 571, asparagine 588, and asparagine 614. Residue asparagine 659 is the site of GPI-anchor amidated asparagine attachment. A propeptide spans 660 to 686 (SGSHLSGISVKFSAMIMLTLLMFTGAV) (removed in mature form).

It belongs to the lysophospholipase family.

Its subcellular location is the cell membrane. The enzyme catalyses a 1-acyl-sn-glycero-3-phosphocholine + H2O = sn-glycerol 3-phosphocholine + a fatty acid + H(+). In terms of biological role, sequentially removes both fatty acyl groups from diacylglycerophospholipids and therefore has both phospholipase A and lysophospholipase activities. Substrate preference is phosphatidylserine &gt; phosphatidylinositol. Does not cleave phosphatidylcholine, phosphatidylethanolamine, phosphatidic acid and phosphatidylinositol-bisphosphate. Mainly responsible for the degradation of phosphatidylinositol in vivo. The protein is Lysophospholipase 3 (PLB3) of Saccharomyces cerevisiae (strain ATCC 204508 / S288c) (Baker's yeast).